The primary structure comprises 338 residues: Solute carrier family 35 member G5 (338 aa).

The disordered stretch occupies residues 1-21; the sequence is MAGSHPYFNLPDSTHPSPPSA. 9 consecutive transmembrane segments (helical) span residues 37–57, 67–87, 105–125, 160–180, 190–210, 221–241, 250–270, 281–301, and 305–325; these read TNGL…VGPL, LPSL…ALPL, CFCA…VQVV, CGLL…LWTL, ALGY…LLVY, TVAF…LFVL, LLSW…FTCV, LVCA…YYVL, and VAPS…IITA. The 126-residue stretch at 49–174 folds into the EamA 1 domain; sequence LPAGFVGPLS…SILGLIIIVG (126 aa). Positions 272–325 constitute an EamA 2 domain; sequence YAVTKAHPALVCAVLHSEVVVALILQYYVLHETVAPSDIMGAGIVLGSIAIITA.

This sequence belongs to the SLC35G solute transporter family.

The protein resides in the membrane. The polypeptide is Solute carrier family 35 member G5 (SLC35G5) (Pan troglodytes (Chimpanzee)).